Consider the following 78-residue polypeptide: Large ribosomal subunit protein eL20 (78 aa).

It belongs to the eukaryotic ribosomal protein eL20 family. Part of the 50S ribosomal subunit. Binds 23S rRNA.

The polypeptide is Large ribosomal subunit protein eL20 (Thermococcus sibiricus (strain DSM 12597 / MM 739)).